We begin with the raw amino-acid sequence, 113 residues long: Endoribonuclease SymE (113 aa).

A SpoVT-AbrB domain is found at 29-74 (SRYPDYSRIPAITLKGQWLEAAGFATGTAVDVKVMEGCIVLTAQPP).

The protein belongs to the SymE family.

The protein localises to the cytoplasm. Functionally, involved in the degradation and recycling of damaged RNA. It is itself a target for degradation by the ATP-dependent protease Lon. The chain is Endoribonuclease SymE from Escherichia coli O6:K15:H31 (strain 536 / UPEC).